A 378-amino-acid chain; its full sequence is Spermidine/putrescine import ATP-binding protein PotA (378 aa).

The region spanning 18–248 (VQLAGIRKCF…PKNLFVTGFI (231 aa)) is the ABC transporter domain. Position 50 to 57 (50 to 57 (GPSGCGKT)) interacts with ATP.

This sequence belongs to the ABC transporter superfamily. Spermidine/putrescine importer (TC 3.A.1.11.1) family. As to quaternary structure, the complex is composed of two ATP-binding proteins (PotA), two transmembrane proteins (PotB and PotC) and a solute-binding protein (PotD).

The protein resides in the cell inner membrane. It carries out the reaction ATP + H2O + polyamine-[polyamine-binding protein]Side 1 = ADP + phosphate + polyamineSide 2 + [polyamine-binding protein]Side 1.. Functionally, part of the ABC transporter complex PotABCD involved in spermidine/putrescine import. Responsible for energy coupling to the transport system. This chain is Spermidine/putrescine import ATP-binding protein PotA, found in Shigella flexneri serotype 5b (strain 8401).